We begin with the raw amino-acid sequence, 337 residues long: MIEADRLIAADNPVFRDEEVIDRAIRPKKLEDYRGQDHVRSQMEIFIKAAQMRQEPLDHLLIFGPPGLGKTTLANIVANEMGVSIRTTSGPVLEKAGDLAALLTNLEENDILFIDEIHRLSPVVEEILYPAMEDYQLDIMIGEGPAARSIKIDLPPFTLIGATTRAGSLTSPLRDRFGIVQRLEYYKVDDLQYIVQRSADCLNLSMESEGALEVARRARGTPRIANRLLRRVRDYADVMSDSHISPDIADKALNMLDVDVCGFDYMDRKLLLAIMEKFNGGPVGLDNVAAAIGEEKDTIEDVIEPYLIQQGYLQRTPRGRIVSDRAYLHFGIDRPDK.

The tract at residues 4–186 is large ATPase domain (RuvB-L); it reads ADRLIAADNP…FGIVQRLEYY (183 aa). Residues I25, R26, G67, K70, T71, T72, 133-135, R176, Y186, and R223 each bind ATP; that span reads EDY. T71 serves as a coordination point for Mg(2+). The tract at residues 187–257 is small ATPAse domain (RuvB-S); the sequence is KVDDLQYIVQ…IADKALNMLD (71 aa). A head domain (RuvB-H) region spans residues 260–337; it reads VCGFDYMDRK…LHFGIDRPDK (78 aa). Residues R315 and R320 each coordinate DNA.

This sequence belongs to the RuvB family. Homohexamer. Forms an RuvA(8)-RuvB(12)-Holliday junction (HJ) complex. HJ DNA is sandwiched between 2 RuvA tetramers; dsDNA enters through RuvA and exits via RuvB. An RuvB hexamer assembles on each DNA strand where it exits the tetramer. Each RuvB hexamer is contacted by two RuvA subunits (via domain III) on 2 adjacent RuvB subunits; this complex drives branch migration. In the full resolvosome a probable DNA-RuvA(4)-RuvB(12)-RuvC(2) complex forms which resolves the HJ.

It localises to the cytoplasm. The enzyme catalyses ATP + H2O = ADP + phosphate + H(+). In terms of biological role, the RuvA-RuvB-RuvC complex processes Holliday junction (HJ) DNA during genetic recombination and DNA repair, while the RuvA-RuvB complex plays an important role in the rescue of blocked DNA replication forks via replication fork reversal (RFR). RuvA specifically binds to HJ cruciform DNA, conferring on it an open structure. The RuvB hexamer acts as an ATP-dependent pump, pulling dsDNA into and through the RuvAB complex. RuvB forms 2 homohexamers on either side of HJ DNA bound by 1 or 2 RuvA tetramers; 4 subunits per hexamer contact DNA at a time. Coordinated motions by a converter formed by DNA-disengaged RuvB subunits stimulates ATP hydrolysis and nucleotide exchange. Immobilization of the converter enables RuvB to convert the ATP-contained energy into a lever motion, pulling 2 nucleotides of DNA out of the RuvA tetramer per ATP hydrolyzed, thus driving DNA branch migration. The RuvB motors rotate together with the DNA substrate, which together with the progressing nucleotide cycle form the mechanistic basis for DNA recombination by continuous HJ branch migration. Branch migration allows RuvC to scan DNA until it finds its consensus sequence, where it cleaves and resolves cruciform DNA. This Aliivibrio salmonicida (strain LFI1238) (Vibrio salmonicida (strain LFI1238)) protein is Holliday junction branch migration complex subunit RuvB.